We begin with the raw amino-acid sequence, 146 residues long: Hemoglobin subunit beta (146 aa).

The Globin domain occupies 2–146 (EWTQQERSII…VVFALGRKYH (145 aa)). Residues His63 and His92 each coordinate heme b.

Belongs to the globin family. Heterotetramer of two alpha chains and two beta chains. As to expression, red blood cells.

Functionally, involved in oxygen transport from gills to the various peripheral tissues. The sequence is that of Hemoglobin subunit beta (hbb) from Thunnus thynnus (Atlantic bluefin tuna).